Here is a 201-residue protein sequence, read N- to C-terminus: 3-isopropylmalate dehydratase small subunit 1 (201 aa).

This sequence belongs to the LeuD family. LeuD type 1 subfamily. As to quaternary structure, heterodimer of LeuC and LeuD.

The enzyme catalyses (2R,3S)-3-isopropylmalate = (2S)-2-isopropylmalate. The protein operates within amino-acid biosynthesis; L-leucine biosynthesis; L-leucine from 3-methyl-2-oxobutanoate: step 2/4. Functionally, catalyzes the isomerization between 2-isopropylmalate and 3-isopropylmalate, via the formation of 2-isopropylmaleate. The sequence is that of 3-isopropylmalate dehydratase small subunit 1 from Salmonella typhimurium (strain LT2 / SGSC1412 / ATCC 700720).